Consider the following 347-residue polypeptide: Fatty acid elongase 2 (347 aa).

At 1–62 (MNSLVTQYAA…PSEFQFIAGE (62 aa)) the chain is on the lumenal side. A glycan (N-linked (GlcNAc...) asparagine) is linked at asparagine 32. The helical transmembrane segment at 63 to 83 (LPLSTLPPVLYAITAYYVIIF) threads the bilayer. Residues 84–96 (GGRFLLSKSKPFK) lie on the Cytoplasmic side of the membrane. Residues 97–119 (LNGLFQLHNLVLTSLSLTLLLLM) traverse the membrane as a helical segment. Residues 120–122 (VEQ) are Lumenal-facing. A helical membrane pass occupies residues 123–142 (LVPIIVQHGLYFAICNIGAW). At 143-146 (TQPL) the chain is on the cytoplasmic side. Residues 147–169 (VTLYYMNYIVKFIEFIDTFFLVL) form a helical membrane-spanning segment. At 170–200 (KHKKLTFLHTYHHGATALLCYTQLMGTTSIS) the chain is on the lumenal side. Positions 178 to 182 (HTYHH) match the HxxHH motif motif. Residues 201–221 (WVPISLNLGVHVVMYWYYFLA) traverse the membrane as a helical segment. The Cytoplasmic segment spans residues 222 to 231 (ARGIRVWWKE). The helical transmembrane segment at 232–254 (WVTRFQIIQFVLDIGFIYFAVYQ) threads the bilayer. Residues 255–275 (KAVHLYFPILPHCGDCVGSTT) lie on the Lumenal side of the membrane. Residues 276 to 296 (ATFAGCAIISSYLVLFISFYI) traverse the membrane as a helical segment. Over 297–347 (NVYKRKGTKTSRVVKRAHGGVAAKVNEYVNVDLKNVPTPSPSPKPQHRRKR) the chain is Cytoplasmic. Threonine 334 carries the phosphothreonine modification. Phosphoserine is present on residues serine 336 and serine 338. Residues 344–347 (RRKR) carry the Di-lysine-like motif motif.

Belongs to the ELO family.

Its subcellular location is the endoplasmic reticulum membrane. It catalyses the reaction a very-long-chain acyl-CoA + malonyl-CoA + H(+) = a very-long-chain 3-oxoacyl-CoA + CO2 + CoA. The enzyme catalyses octadecanoyl-CoA + malonyl-CoA + H(+) = 3-oxoeicosanoyl-CoA + CO2 + CoA. It carries out the reaction hexadecanoyl-CoA + malonyl-CoA + H(+) = 3-oxooctadecanoyl-CoA + CO2 + CoA. The catalysed reaction is eicosanoyl-CoA + malonyl-CoA + H(+) = 3-oxodocosanoyl-CoA + CO2 + CoA. It catalyses the reaction docosanoyl-CoA + malonyl-CoA + H(+) = 3-oxotetracosanoyl-CoA + CO2 + CoA. Component of a microsomal membrane-bound long-chain fatty acid elongation system, which produces the 20-26-carbon very long-chain fatty acids (VLCFA) from long-chain fatty acid precursors and is involved ceramide and inositol sphingolipid biosynthesis. Component of elongase II, which elongates 16-18 carbon fatty acyl-CoAs such as palmitoyl-CoA and stearoyl-CoA to 20-22-carbon fatty acids by incorporation of malonyl-CoA. Involved in the synthesis of 1,3-beta-glucan. The enzymes active site faces the cytosol, whereas VLCFA length is determined by a lysine near the luminal end of transmembrane helix 6. Plays an important role in lipotoxic cell death induced by oleic acid through maintaining a balanced fatty acid composition in thr plasma membrane. The polypeptide is Fatty acid elongase 2 (Saccharomyces cerevisiae (strain ATCC 204508 / S288c) (Baker's yeast)).